Here is a 358-residue protein sequence, read N- to C-terminus: Alanine racemase (358 aa).

Lysine 34 functions as the Proton acceptor; specific for D-alanine in the catalytic mechanism. Residue lysine 34 is modified to N6-(pyridoxal phosphate)lysine. Arginine 129 is a binding site for substrate. Tyrosine 254 acts as the Proton acceptor; specific for L-alanine in catalysis. Methionine 302 provides a ligand contact to substrate.

The protein belongs to the alanine racemase family. Pyridoxal 5'-phosphate is required as a cofactor.

The catalysed reaction is L-alanine = D-alanine. It participates in amino-acid biosynthesis; D-alanine biosynthesis; D-alanine from L-alanine: step 1/1. Its function is as follows. Catalyzes the interconversion of L-alanine and D-alanine. May also act on other amino acids. This is Alanine racemase (alr) from Vibrio parahaemolyticus serotype O3:K6 (strain RIMD 2210633).